A 216-amino-acid polypeptide reads, in one-letter code: Large ribosomal subunit protein uL3 (216 aa).

A disordered region spans residues 132-155 (QDASHGNSRSHRVPGSIGQNQTPG). N5-methylglutamine is present on Q152.

Belongs to the universal ribosomal protein uL3 family. As to quaternary structure, part of the 50S ribosomal subunit. Forms a cluster with proteins L14 and L19. Methylated by PrmB.

One of the primary rRNA binding proteins, it binds directly near the 3'-end of the 23S rRNA, where it nucleates assembly of the 50S subunit. This Legionella pneumophila (strain Paris) protein is Large ribosomal subunit protein uL3.